The following is a 456-amino-acid chain: RUN domain-containing protein 3B (456 aa).

The disordered stretch occupies residues methionine 1–serine 26. A compositionally biased stretch (gly residues) spans glycine 8–lysine 21. Arginine 13 is modified (omega-N-methylarginine). The 133-residue stretch at aspartate 57–glutamate 189 folds into the RUN domain. A phosphoserine mark is found at serine 215 and serine 216. Residues alanine 300–asparagine 325 are a coiled coil. Residues serine 382–isoleucine 405 form a disordered region.

It belongs to the RUNDC3 family. Interacts with RAP2A.

This is RUN domain-containing protein 3B (RUNDC3B) from Macaca fascicularis (Crab-eating macaque).